Reading from the N-terminus, the 711-residue chain is Toxin RTX-III translocation ATP-binding protein (711 aa).

The region spanning 1–129 (MESQMPFNEK…EIFQGGMILI (129 aa)) is the Peptidase C39 domain. H87 is a catalytic residue. Positions 158-440 (FVETIIVSIF…LAQLWQDFQQ (283 aa)) constitute an ABC transmembrane type-1 domain. 5 helical membrane passes run 162–182 (IIVS…FQVV), 195–215 (LNVI…LSGL), 273–293 (ALTS…MWYY), 299–319 (IVIL…SPIL), and 392–412 (VMII…LSIG). In terms of domain architecture, ABC transporter spans 472 to 707 (IAFKHIRFRY…ENGLYYYLNQ (236 aa)). 506 to 513 (GRSGSGKS) contacts ATP.

It belongs to the ABC transporter superfamily. Protein-1 exporter (TC 3.A.1.109) family. Homodimer.

The protein resides in the cell membrane. In terms of biological role, involved in the transport of the toxin RTX-III. This chain is Toxin RTX-III translocation ATP-binding protein (apxIIIB), found in Actinobacillus pleuropneumoniae (Haemophilus pleuropneumoniae).